The following is a 239-amino-acid chain: Probable transcriptional regulatory protein LMOf2365_0385 (239 aa).

It belongs to the TACO1 family. YeeN subfamily.

The protein resides in the cytoplasm. This chain is Probable transcriptional regulatory protein LMOf2365_0385, found in Listeria monocytogenes serotype 4b (strain F2365).